The sequence spans 138 residues: HHSKHHAAYVKGVNDAVAKLEEARAKDDHSAIFLNEKNLAFHLGGHVNHSIWWKNLSPNGGDKPTGDLASAIDDAFGSFDKFRAQFSAAANGLQGSGWAVLGYDSLGDKLLTFQLYDQQANVPLGIIPLLQVDMWEHA.

Residues His1, His49, Asp133, and His137 each contribute to the Mn(2+) site.

It belongs to the iron/manganese superoxide dismutase family. It depends on Mn(2+) as a cofactor.

It catalyses the reaction 2 superoxide + 2 H(+) = H2O2 + O2. In terms of biological role, destroys superoxide anion radicals which are normally produced within the cells and which are toxic to biological systems. This Mycobacterium malmoense protein is Superoxide dismutase [Mn] (sodA).